The primary structure comprises 39 residues: Potassium channel toxin alpha-KTx 2.9 (39 aa).

Cystine bridges form between cysteine 7–cysteine 29, cysteine 13–cysteine 34, and cysteine 17–cysteine 36. Asparagine 39 is modified (asparagine amide).

Belongs to the short scorpion toxin superfamily. Potassium channel inhibitor family. Alpha-KTx 02 subfamily. As to expression, expressed by the venom gland.

The protein resides in the secreted. Functionally, blocks Kv1.3/KCNA3 voltage-gated potassium channels of human T-lymphocytes (Kd=0.25 nM). This chain is Potassium channel toxin alpha-KTx 2.9, found in Centruroides elegans (Bark scorpion).